Consider the following 582-residue polypeptide: Protein alan shepard (582 aa).

Pro residues predominate over residues 1–12 (MHPRYSPAPPPQ). A disordered region spans residues 1–73 (MHPRYSPAPP…AAPPTSRSAF (73 aa)). Tyrosine 5 is subject to Phosphotyrosine. The segment covering 13–24 (QQQQMGGPPHQQ) has biased composition (low complexity). A compositionally biased stretch (gly residues) spans 25–35 (QGGGGGGGGSM). Positions 37–57 (GPSNAQQLPPQIPRSQNYSNG) are enriched in polar residues. The span at 58–72 (SSSSAAAAPPTSRSA) shows a compositional bias: low complexity. Residues tyrosine 125 and tyrosine 142 each carry the phosphotyrosine modification. Residues 164–225 (PATTTYGQRV…TVQNQNQQGG (62 aa)) are disordered. Over residues 178-225 (SPSNTNSSSSSNTGSQSGTLSTSLSNTTNTNTNMGPNGTVQNQNQQGG) the composition is skewed to low complexity. 2 RRM domains span residues 231–304 (TNLY…MAKQ) and 310–389 (TNLY…FADG). The segment at 555-582 (PMTDSEQASTAASPDEAYTQYPHQAAPK) is disordered.

In terms of biological role, has a role in the perception of gravity. This chain is Protein alan shepard, found in Drosophila erecta (Fruit fly).